The primary structure comprises 179 residues: GTP-dependent dephospho-CoA kinase (179 aa).

The GTP site is built by D55, V57, D74, K76, and E128.

Belongs to the GTP-dependent DPCK family.

It carries out the reaction 3'-dephospho-CoA + GTP = GDP + CoA + H(+). It participates in cofactor biosynthesis; coenzyme A biosynthesis. Its function is as follows. Catalyzes the GTP-dependent phosphorylation of the 3'-hydroxyl group of dephosphocoenzyme A to form coenzyme A (CoA). The polypeptide is GTP-dependent dephospho-CoA kinase (Saccharolobus solfataricus (strain ATCC 35092 / DSM 1617 / JCM 11322 / P2) (Sulfolobus solfataricus)).